Here is a 250-residue protein sequence, read N- to C-terminus: Lectin 1 (250 aa).

The N-linked (GlcNAc...) asparagine; partial glycan is linked to N119. E128 and D130 together coordinate Mn(2+). Ca(2+) contacts are provided by D130, Y132, N138, and D141. Residues D141 and H146 each coordinate Mn(2+).

This sequence belongs to the leguminous lectin family.

In terms of biological role, di-N-acetylchitobiose specific lectin. The protein is Lectin 1 of Laburnum alpinum (Scotch laburnum).